Here is a 428-residue protein sequence, read N- to C-terminus: Histone deacetylase 3 (428 aa).

The tract at residues 3 to 316 is histone deacetylase; sequence KTVAYFYDPD…WTYETSLLVE (314 aa). Residues His17, Gly21, and Lys25 each coordinate 1D-myo-inositol 1,4,5,6-tetrakisphosphate. His135 is a catalytic residue. Residues Asp170, His172, and Asp259 each coordinate Zn(2+). Residue Arg265 coordinates 1D-myo-inositol 1,4,5,6-tetrakisphosphate. Basic and acidic residues-rich tracts occupy residues 388–405 and 415–428; these read DRTD…ENYS and DGDH…DVEI. Residues 388-428 form a disordered region; that stretch reads DRTDEADAEERGPEENYSRPEAPNEFYDGDHDNDKESDVEI. Ser424 carries the post-translational modification Phosphoserine.

It belongs to the histone deacetylase family. HD type 1 subfamily. In terms of assembly, interacts with HDAC7 and HDAC9. Interacts with DAXX, KDM4A, HDAC10 and DACH1. Found in a complex with NCOR1 and NCOR2. Component of the N-Cor repressor complex, at least composed of NCOR1, NCOR2, HDAC3, TBL1X, TBL1R, CORO2A and GPS2. Interacts with BCOR, MJD2A/JHDM3A, NRIP1, PRDM6 and SRY. Interacts with BTBD14B. Interacts with GLIS2. Interacts (via the DNA-binding domain) with NR2C1; the interaction recruits phosphorylated NR2C1 to PML bodies for sumoylation. Component of the Notch corepressor complex. Interacts with CBFA2T3 and NKAP. Interacts with APEX1; the interaction is not dependent on the acetylated status of APEX1. Interacts with ZMYND15. Interacts with SMRT/NCOR2 and BCL6 on DNA enhancer elements. Interacts with INSM1. Interacts with XBP1 isoform 1; the interaction occurs in endothelial cell (EC) under disturbed flow. Interacts (via C-terminus) with CCAR2 (via N-terminus). Interacts with and deacetylates MEF2D. Interacts with BEND3. Interacts with NKAPL. Interacts with DHX36; this interaction occurs in a RNA-dependent manner. Interacts weakly with CRY1; this interaction is enhanced in the presence of FBXL3. Interacts with FBXL3 and BMAL1. Interacts with NCOR1. Interacts with RARA. Interacts with SETD5. (Microbial infection) Interacts with human cytomegalovirus (HHV-5) immediate early protein IE1; this interaction decreases histone acetylation and allows transcriptional activation by the virus. It depends on Zn(2+) as a cofactor. Post-translationally, sumoylated in vitro. Deubiquitinated on 'Lys-63'-linked ubiquitin chains by USP38; leading to a decreased level of histone acetylation. In terms of tissue distribution, widely expressed.

Its subcellular location is the nucleus. It is found in the chromosome. The protein localises to the cytoplasm. The protein resides in the cytosol. The catalysed reaction is N(6)-acetyl-L-lysyl-[histone] + H2O = L-lysyl-[histone] + acetate. It carries out the reaction N(6)-acetyl-L-lysyl-[protein] + H2O = L-lysyl-[protein] + acetate. It catalyses the reaction N(6)-(2E)-butenoyl-L-lysyl-[protein] + H2O = (2E)-2-butenoate + L-lysyl-[protein]. The enzyme catalyses N(6)-(2-hydroxyisobutanoyl)-L-lysyl-[protein] + H2O = 2-hydroxy-2-methylpropanoate + L-lysyl-[protein]. The catalysed reaction is N(6)-[(S)-lactoyl]-L-lysyl-[protein] + H2O = (S)-lactate + L-lysyl-[protein]. Its activity is regulated as follows. Inositol tetraphosphate (1D-myo-inositol 1,4,5,6-tetrakisphosphate) promotes the histone deacetylase activity by acting as an intermolecular glue between HDAC3 and NCOR2, thereby promoting its association with the N-Cor complex, a prerequisite for the histone deacetylase activity. Its function is as follows. Histone deacetylase that catalyzes the deacetylation of lysine residues on the N-terminal part of the core histones (H2A, H2B, H3 and H4), and some other non-histone substrates. Histone deacetylation gives a tag for epigenetic repression and plays an important role in transcriptional regulation, cell cycle progression and developmental events. Histone deacetylases act via the formation of large multiprotein complexes, such as N-Cor repressor complex, which activate the histone deacetylase activity. Participates in the BCL6 transcriptional repressor activity by deacetylating the H3 'Lys-27' (H3K27) on enhancer elements, antagonizing EP300 acetyltransferase activity and repressing proximal gene expression. Acts as a molecular chaperone for shuttling phosphorylated NR2C1 to PML bodies for sumoylation. Contributes, together with XBP1 isoform 1, to the activation of NFE2L2-mediated HMOX1 transcription factor gene expression in a PI(3)K/mTORC2/Akt-dependent signaling pathway leading to endothelial cell (EC) survival under disturbed flow/oxidative stress. Regulates both the transcriptional activation and repression phases of the circadian clock in a deacetylase activity-independent manner. During the activation phase, promotes the accumulation of ubiquitinated BMAL1 at the E-boxes and during the repression phase, blocks FBXL3-mediated CRY1/2 ubiquitination and promotes the interaction of CRY1 and BMAL1. The NCOR1-HDAC3 complex regulates the circadian expression of the core clock gene BMAL1 and the genes involved in lipid metabolism in the liver. Also functions as a deacetylase for non-histone targets, such as KAT5, MEF2D, MAPK14, RARA and STAT3. Serves as a corepressor of RARA, mediating its deacetylation and repression, leading to inhibition of RARE DNA element binding. In association with RARA, plays a role in the repression of microRNA-10a and thereby in the inflammatory response. In addition to protein deacetylase activity, also acts as a protein-lysine deacylase by recognizing other acyl groups: catalyzes removal of (2E)-butenoyl (crotonyl), lactoyl (lactyl) and 2-hydroxyisobutanoyl (2-hydroxyisobutyryl) acyl groups from lysine residues, leading to protein decrotonylation, delactylation and de-2-hydroxyisobutyrylation, respectively. Catalyzes decrotonylation of MAPRE1/EB1. Mediates delactylation NBN/NBS1, thereby inhibiting DNA double-strand breaks (DSBs) via homologous recombination (HR). The sequence is that of Histone deacetylase 3 (HDAC3) from Homo sapiens (Human).